The primary structure comprises 201 residues: Small ribosomal subunit protein uS4c (201 aa).

Residues 20-39 form a disordered region; it reads GLTRKTPKSGSNLKKKFHSG. Positions 89-150 constitute an S4 RNA-binding domain; sequence MRLDNILFRL…NQRSKRLVQN (62 aa).

This sequence belongs to the universal ribosomal protein uS4 family. As to quaternary structure, part of the 30S ribosomal subunit. Contacts protein S5. The interaction surface between S4 and S5 is involved in control of translational fidelity.

The protein resides in the plastid. Its subcellular location is the chloroplast. Its function is as follows. One of the primary rRNA binding proteins, it binds directly to 16S rRNA where it nucleates assembly of the body of the 30S subunit. Functionally, with S5 and S12 plays an important role in translational accuracy. This Oryza nivara (Indian wild rice) protein is Small ribosomal subunit protein uS4c (rps4).